A 168-amino-acid polypeptide reads, in one-letter code: Large ribosomal subunit protein uL10 (168 aa).

This sequence belongs to the universal ribosomal protein uL10 family. In terms of assembly, part of the ribosomal stalk of the 50S ribosomal subunit. The N-terminus interacts with L11 and the large rRNA to form the base of the stalk. The C-terminus forms an elongated spine to which L12 dimers bind in a sequential fashion forming a multimeric L10(L12)X complex.

Functionally, forms part of the ribosomal stalk, playing a central role in the interaction of the ribosome with GTP-bound translation factors. In Acidovorax ebreus (strain TPSY) (Diaphorobacter sp. (strain TPSY)), this protein is Large ribosomal subunit protein uL10.